Consider the following 197-residue polypeptide: Probable GTP-binding protein EngB (197 aa).

The 174-residue stretch at 24–197 folds into the EngB-type G domain; sequence DIPEIALAGR…WDAILEKVNK (174 aa). GTP is bound by residues 32–39, 59–63, 77–80, 144–147, and 176–178; these read GRSNVGKS, GKTQL, DVPG, TKAD, and FSS. Residues Ser-39 and Thr-61 each coordinate Mg(2+).

It belongs to the TRAFAC class TrmE-Era-EngA-EngB-Septin-like GTPase superfamily. EngB GTPase family. Mg(2+) is required as a cofactor.

Necessary for normal cell division and for the maintenance of normal septation. The chain is Probable GTP-binding protein EngB from Streptococcus gordonii (strain Challis / ATCC 35105 / BCRC 15272 / CH1 / DL1 / V288).